The sequence spans 59 residues: Large ribosomal subunit protein uL30 (59 aa).

It belongs to the universal ribosomal protein uL30 family. In terms of assembly, part of the 50S ribosomal subunit.

This chain is Large ribosomal subunit protein uL30, found in Histophilus somni (strain 129Pt) (Haemophilus somnus).